A 343-amino-acid polypeptide reads, in one-letter code: Dihydroorotate dehydrogenase (quinone) (343 aa).

FMN is bound by residues 61 to 65 and threonine 85; that span reads AGLDK. Lysine 65 is a binding site for substrate. Residue 110–114 coordinates substrate; that stretch reads NRMGF. 2 residues coordinate FMN: asparagine 138 and asparagine 171. Substrate is bound at residue asparagine 171. Serine 174 functions as the Nucleophile in the catalytic mechanism. Residue asparagine 176 coordinates substrate. Residues lysine 216 and threonine 244 each contribute to the FMN site. 245 to 246 serves as a coordination point for substrate; the sequence is NT. FMN-binding positions include glycine 267, glycine 296, and 317–318; that span reads YS.

This sequence belongs to the dihydroorotate dehydrogenase family. Type 2 subfamily. Monomer. The cofactor is FMN.

Its subcellular location is the cell membrane. It catalyses the reaction (S)-dihydroorotate + a quinone = orotate + a quinol. It functions in the pathway pyrimidine metabolism; UMP biosynthesis via de novo pathway; orotate from (S)-dihydroorotate (quinone route): step 1/1. Functionally, catalyzes the conversion of dihydroorotate to orotate with quinone as electron acceptor. This chain is Dihydroorotate dehydrogenase (quinone), found in Pseudomonas syringae pv. syringae (strain B728a).